The following is a 427-amino-acid chain: NAD kinase 2, mitochondrial (427 aa).

Residues 1–33 (MSLCLRLLCSVCGAAALRVPLGVSSLRALSGSA) constitute a mitochondrion transit peptide.

Belongs to the NAD kinase family. In terms of assembly, homodimer.

It localises to the mitochondrion. It catalyses the reaction NAD(+) + ATP = ADP + NADP(+) + H(+). Its function is as follows. Mitochondrial NAD(+) kinase that phosphorylates NAD(+) to yield NADP(+). Can use both ATP or inorganic polyphosphate as the phosphoryl donor. The protein is NAD kinase 2, mitochondrial (nadk2) of Xenopus tropicalis (Western clawed frog).